The following is a 932-amino-acid chain: Isoleucine--tRNA ligase (932 aa).

A 'HIGH' region motif is present at residues 58-68 (PYANGNLHLGH). L-isoleucyl-5'-AMP is bound at residue E567. Residues 608–612 (KMSKS) carry the 'KMSKS' region motif. Residue K611 participates in ATP binding. Zn(2+)-binding residues include C895, C898, C915, and C918.

Belongs to the class-I aminoacyl-tRNA synthetase family. IleS type 1 subfamily. In terms of assembly, monomer. The cofactor is Zn(2+).

The protein localises to the cytoplasm. The catalysed reaction is tRNA(Ile) + L-isoleucine + ATP = L-isoleucyl-tRNA(Ile) + AMP + diphosphate. In terms of biological role, catalyzes the attachment of isoleucine to tRNA(Ile). As IleRS can inadvertently accommodate and process structurally similar amino acids such as valine, to avoid such errors it has two additional distinct tRNA(Ile)-dependent editing activities. One activity is designated as 'pretransfer' editing and involves the hydrolysis of activated Val-AMP. The other activity is designated 'posttransfer' editing and involves deacylation of mischarged Val-tRNA(Ile). This is Isoleucine--tRNA ligase from Azoarcus sp. (strain BH72).